The sequence spans 489 residues: Bifunctional protein HldE (489 aa).

Residues 1–328 form a ribokinase region; it reads METENIHSFD…ELKAQLQDQP (328 aa). 206 to 209 is an ATP binding site; the sequence is NKKE. The active site involves Asp276. Residues 357 to 489 form a cytidylyltransferase region; it reads LTNGCFDLLH…IIQDIRNGRG (133 aa).

This sequence in the N-terminal section; belongs to the carbohydrate kinase PfkB family. The protein in the C-terminal section; belongs to the cytidylyltransferase family. In terms of assembly, homodimer.

The catalysed reaction is D-glycero-beta-D-manno-heptose 7-phosphate + ATP = D-glycero-beta-D-manno-heptose 1,7-bisphosphate + ADP + H(+). It catalyses the reaction D-glycero-beta-D-manno-heptose 1-phosphate + ATP + H(+) = ADP-D-glycero-beta-D-manno-heptose + diphosphate. Its pathway is nucleotide-sugar biosynthesis; ADP-L-glycero-beta-D-manno-heptose biosynthesis; ADP-L-glycero-beta-D-manno-heptose from D-glycero-beta-D-manno-heptose 7-phosphate: step 1/4. It participates in nucleotide-sugar biosynthesis; ADP-L-glycero-beta-D-manno-heptose biosynthesis; ADP-L-glycero-beta-D-manno-heptose from D-glycero-beta-D-manno-heptose 7-phosphate: step 3/4. Functionally, catalyzes the phosphorylation of D-glycero-D-manno-heptose 7-phosphate at the C-1 position to selectively form D-glycero-beta-D-manno-heptose-1,7-bisphosphate. Catalyzes the ADP transfer from ATP to D-glycero-beta-D-manno-heptose 1-phosphate, yielding ADP-D-glycero-beta-D-manno-heptose. The protein is Bifunctional protein HldE of Desulfatibacillum aliphaticivorans.